Here is a 331-residue protein sequence, read N- to C-terminus: Cytoplasmic envelopment protein 1 (331 aa).

The protein belongs to the herpesviridae cytoplasmic envelopment protein 1 family. Interacts with protein ORF7; this interaction localizes protein ORF53 to the host trans-Golgi network (TGN).

It is found in the virion. The protein resides in the virion tegument. The protein localises to the host cytoplasm. Its subcellular location is the host Golgi apparatus. Its function is as follows. Plays a critical role in cytoplasmic virus egress. Participates in the final step of tegumentation and envelope acquisition within the host cytoplasm. This chain is Cytoplasmic envelopment protein 1 (ORF53), found in Varicella-zoster virus (strain Dumas) (HHV-3).